The chain runs to 716 residues: tRNA(Met) cytidine acetyltransferase TmcA (716 aa).

ATP-binding positions include Gln192, 217–226 (GRGKSYVIGL), and Arg364. Residues 401-567 (REVLARDREV…KNVALAKPLD (167 aa)) form the N-acetyltransferase domain. Residues 493–495 (IAV) and 500–506 (QRRGLGS) each bind acetyl-CoA.

The protein belongs to the RNA cytidine acetyltransferase family. TmcA subfamily.

It is found in the cytoplasm. The catalysed reaction is cytidine(34) in elongator tRNA(Met) + acetyl-CoA + ATP + H2O = N(4)-acetylcytidine(34) in elongator tRNA(Met) + ADP + phosphate + CoA + H(+). In terms of biological role, catalyzes the formation of N(4)-acetylcytidine (ac(4)C) at the wobble position of tRNA(Met), by using acetyl-CoA as an acetyl donor and ATP (or GTP). This Aeropyrum pernix (strain ATCC 700893 / DSM 11879 / JCM 9820 / NBRC 100138 / K1) protein is tRNA(Met) cytidine acetyltransferase TmcA.